A 491-amino-acid polypeptide reads, in one-letter code: MKTIIDNFVDRVIEYGMYNEIDKIYVKNRVLALIGEEGIDRISDENDLKQIKDYLVEIALKNGKIKDLIEEKECLGAELMNFIVPLPSRLNDIFWSSYDISPQEAVEEFYKLSKDSDYIKTSAIAKNIEFRASTKYGELEITINLSKPEKDPKTIAAEKLVKATNYPKCLLCMENEGYQGRINYPARSNHRIIRLKLGDEVWGFQYSPYSYFNEHAIFLNSQHVPMAITSKTFEQLLEIVDILPGYFAGSNSDLPISGGSILSHNHYQGGKHIFPMEKAKFESEFCFKDFEDVNAGIVKWPMSVIRLQSENKNRLLDLATKILNKWREYSDLEVDIIAMTEDVPHHTVTPIARKVDGRYELDIVLRDNHTTEQYPDGVFHPHQDVQHIKKENIGLIEVMGLAILPPRLKPELEEVGKYLLGEDNAIADYHLEWADQLKEKYPRINKEEVNSVVQHEAGQVFARVLEDAGVYKNTPSGHEAFMRFVKSVGIN.

The protein belongs to the galactose-1-phosphate uridylyltransferase type 2 family.

Its subcellular location is the cytoplasm. It catalyses the reaction alpha-D-galactose 1-phosphate + UDP-alpha-D-glucose = alpha-D-glucose 1-phosphate + UDP-alpha-D-galactose. The protein operates within carbohydrate metabolism; galactose metabolism. The chain is Galactose-1-phosphate uridylyltransferase 1 (galT1) from Streptococcus pneumoniae serotype 4 (strain ATCC BAA-334 / TIGR4).